A 361-amino-acid polypeptide reads, in one-letter code: Nicotinate-nucleotide--dimethylbenzimidazole phosphoribosyltransferase (361 aa).

Catalysis depends on Glu314, which acts as the Proton acceptor.

This sequence belongs to the CobT family.

The catalysed reaction is 5,6-dimethylbenzimidazole + nicotinate beta-D-ribonucleotide = alpha-ribazole 5'-phosphate + nicotinate + H(+). It functions in the pathway nucleoside biosynthesis; alpha-ribazole biosynthesis; alpha-ribazole from 5,6-dimethylbenzimidazole: step 1/2. Catalyzes the synthesis of alpha-ribazole-5'-phosphate from nicotinate mononucleotide (NAMN) and 5,6-dimethylbenzimidazole (DMB). This is Nicotinate-nucleotide--dimethylbenzimidazole phosphoribosyltransferase from Mycobacterium bovis (strain BCG / Pasteur 1173P2).